The primary structure comprises 41 residues: uncharacterized protein (41 aa).

A disordered region spans residues 19–41 (NSTRNSSSSSRSSYSSRTTVFSL).

This is an uncharacterized protein from Dictyostelium discoideum (Social amoeba).